Here is a 55-residue protein sequence, read N- to C-terminus: Methylmalonyl-CoA decarboxylase subunit epsilon (55 aa).

In terms of assembly, the methylmalonyl-CoA decarboxylase is composed of five subunits: the carboxyltransferase alpha subunit (MmdA), the tunnel beta subunit (MmdB), the biotin-containing gamma subunit (MmdC), and the delta (MmdD) and epsilon (MmdE) subunits.

The protein localises to the cell membrane. The enzyme catalyses (S)-methylmalonyl-CoA + Na(+)(in) + H(+)(out) = propanoyl-CoA + Na(+)(out) + CO2. Completely inhibited by avidin. Subunit of the sodium ion pump methylmalonyl-CoA decarboxylase, which converts the chemical energy of a decarboxylation reaction into an electrochemical gradient of Na(+) ions across the cytoplasmic membrane, thereby creating a sodium ion motive force that is used for ATP synthesis. The epsilon subunit seems not important for the catalysis of either decarboxylation or Na(+) transport, but it improves binding of the alpha subunit and plays an important role in stabilizing the methylmalonyl-CoA-decarboxylase enzyme complex. Can also convert malonyl-CoA into acetyl-CoA. The sequence is that of Methylmalonyl-CoA decarboxylase subunit epsilon from Veillonella parvula (Staphylococcus parvulus).